The sequence spans 453 residues: Ribosome biogenesis protein YTM1 (453 aa).

The ubiquitin-like (UBL) domain stretch occupies residues 8-89 (VKLRFFTREQ…ETFLNVEYTR (82 aa)). Positions 99–453 (SFSNEDWVSS…INKGDNIFKS (355 aa)) are sufficient for interaction with ERB1 and association with 66S pre-ribosomes. 7 WD repeats span residues 101–139 (SNED…EKQY), 141–179 (GHSA…LKQP), 199–237 (GHKA…MTVV), 278–318 (SHTG…CIDT), 320–359 (TTSY…TSKI), 366–406 (GHKN…PMYT), and 417–453 (GVND…IFKS).

It belongs to the WD repeat WDR12/YTM1 family. As to quaternary structure, component of the NOP7 complex, composed of ERB1, NOP7 and YTM1. The complex is held together by ERB1, which interacts with NOP7 via its N-terminal domain and with YTM1 via a high-affinity interaction between the seven-bladed beta-propeller domains of the 2 proteins. The NOP7 complex associates with the 66S pre-ribosome. Interacts (via UBL domain) with MDN1 (via VWFA/MIDAS domain).

The protein localises to the nucleus. The protein resides in the nucleolus. It is found in the nucleoplasm. Component of the NOP7 complex, which is required for maturation of the 25S and 5.8S ribosomal RNAs and formation of the 60S ribosome. The chain is Ribosome biogenesis protein YTM1 from Vanderwaltozyma polyspora (strain ATCC 22028 / DSM 70294 / BCRC 21397 / CBS 2163 / NBRC 10782 / NRRL Y-8283 / UCD 57-17) (Kluyveromyces polysporus).